The sequence spans 403 residues: 4-hydroxy-3-methylbut-2-en-1-yl diphosphate synthase (ferredoxin) (403 aa).

Residues Cys-312, Cys-315, Cys-346, and Glu-353 each contribute to the [4Fe-4S] cluster site.

The protein belongs to the IspG family. It depends on [4Fe-4S] cluster as a cofactor.

The catalysed reaction is (2E)-4-hydroxy-3-methylbut-2-enyl diphosphate + 2 oxidized [2Fe-2S]-[ferredoxin] + H2O = 2-C-methyl-D-erythritol 2,4-cyclic diphosphate + 2 reduced [2Fe-2S]-[ferredoxin] + H(+). Its pathway is isoprenoid biosynthesis; isopentenyl diphosphate biosynthesis via DXP pathway; isopentenyl diphosphate from 1-deoxy-D-xylulose 5-phosphate: step 5/6. Its function is as follows. Converts 2C-methyl-D-erythritol 2,4-cyclodiphosphate (ME-2,4cPP) into 1-hydroxy-2-methyl-2-(E)-butenyl 4-diphosphate. The polypeptide is 4-hydroxy-3-methylbut-2-en-1-yl diphosphate synthase (ferredoxin) (Synechocystis sp. (strain ATCC 27184 / PCC 6803 / Kazusa)).